Consider the following 379-residue polypeptide: Putative glutamate--cysteine ligase 2 (379 aa).

The protein belongs to the glutamate--cysteine ligase type 2 family. YbdK subfamily.

It carries out the reaction L-cysteine + L-glutamate + ATP = gamma-L-glutamyl-L-cysteine + ADP + phosphate + H(+). Functionally, ATP-dependent carboxylate-amine ligase which exhibits weak glutamate--cysteine ligase activity. This chain is Putative glutamate--cysteine ligase 2, found in Roseiflexus castenholzii (strain DSM 13941 / HLO8).